Consider the following 530-residue polypeptide: Ubiquitin carboxyl-terminal hydrolase 17-like protein 1 (530 aa).

In terms of domain architecture, USP spans 80-375 (AGLQNMGNTC…QAYVLFYIQK (296 aa)). Cys-89 serves as the catalytic Nucleophile. Catalysis depends on His-334, which acts as the Proton acceptor. 2 stretches are compositionally biased toward basic and acidic residues: residues 382 to 392 (SESVSRGREPR) and 398 to 411 (DTDRRAKQGELKRD). Residues 382-411 (SESVSRGREPRALGAEDTDRRAKQGELKRD) are disordered.

The protein belongs to the peptidase C19 family. USP17 subfamily.

The protein resides in the nucleus. Its subcellular location is the endoplasmic reticulum. The enzyme catalyses Thiol-dependent hydrolysis of ester, thioester, amide, peptide and isopeptide bonds formed by the C-terminal Gly of ubiquitin (a 76-residue protein attached to proteins as an intracellular targeting signal).. Functionally, deubiquitinating enzyme that removes conjugated ubiquitin from specific proteins to regulate different cellular processes that may include cell proliferation, progression through the cell cycle, apoptosis, cell migration, and the cellular response to viral infection. The chain is Ubiquitin carboxyl-terminal hydrolase 17-like protein 1 (USP17L1) from Homo sapiens (Human).